A 131-amino-acid polypeptide reads, in one-letter code: Glycine cleavage system H protein (131 aa).

A Lipoyl-binding domain is found at 24–106; sequence RVTVGISDHA…YGEGWIFVVE (83 aa). K65 is subject to N6-lipoyllysine.

This sequence belongs to the GcvH family. The glycine cleavage system is composed of four proteins: P, T, L and H. (R)-lipoate serves as cofactor.

Its function is as follows. The glycine cleavage system catalyzes the degradation of glycine. The H protein shuttles the methylamine group of glycine from the P protein to the T protein. The sequence is that of Glycine cleavage system H protein from Xanthomonas oryzae pv. oryzae (strain MAFF 311018).